Reading from the N-terminus, the 295-residue chain is Gamma-glutamyl-L-1-hydroxyisopropylamide hydrolase (295 aa).

Residues 5-221 enclose the Glutamine amidotransferase type-1 domain; it reads RILICDGNTE…LRESARSLVE (217 aa). The Nucleophile role is filled by Cys104. Residues His200 and Glu202 contribute to the active site.

The catalysed reaction is gamma-L-glutamyl-L-alaninol + H2O = L-alaninol + L-glutamate. Functionally, involved in the degradation of isopropylamine, which is a constituent of the herbicides atrazine. Catalyzes the hydrolysis of gamma-glutamyl-L-alaninol (GALO) to L-alaninol and L-glutamate. It can also uses gamma-glutamyl-isopropylamide, gamma-glutamyl-ethylamide, L-glutamine, and gamma-glutamyl-p-nitroanilide. In Pseudomonas sp, this protein is Gamma-glutamyl-L-1-hydroxyisopropylamide hydrolase (ipuF).